The following is a 353-amino-acid chain: Guanine nucleotide-binding protein subunit alpha (353 aa).

Residues 1 to 25 (MGCGMSTEDKEGKARNEEIENQLKR) form a disordered region. Glycine 2 carries N-myristoyl glycine lipidation. Residue cysteine 3 is the site of S-palmitoyl cysteine attachment. The span at 7–25 (TEDKEGKARNEEIENQLKR) shows a compositional bias: basic and acidic residues. The 322-residue stretch at 32 to 353 (NEIKMLLLGA…QENLRLCGLI (322 aa)) folds into the G-alpha domain. Residues 35 to 48 (KMLLLGAGESGKST) are G1 motif. Positions 43, 44, 45, 46, 47, 48, 150, 175, 181, 203, 269, 270, 272, and 325 each coordinate GTP. Mg(2+) is bound at residue serine 47. The segment at 173–181 (DVLRSRVKT) is G2 motif. Threonine 181 provides a ligand contact to Mg(2+). Residues 196 to 205 (YRMFDVGGQR) form a G3 motif region. Positions 265–272 (ILFLNKID) are G4 motif. The interval 323–328 (TCATDT) is G5 motif.

This sequence belongs to the G-alpha family. G(q) subfamily. In terms of assembly, g proteins are composed of 3 units; alpha, beta and gamma. The alpha chain contains the guanine nucleotide binding site. Mg(2+) is required as a cofactor.

Guanine nucleotide-binding proteins (G proteins) are involved as modulators or transducers in various transmembrane signaling systems. This Colletotrichum trifolii protein is Guanine nucleotide-binding protein subunit alpha (CTG1).